The primary structure comprises 242 residues: Venom nerve growth factor 1 (242 aa).

Residues 1–18 form the signal peptide; sequence MSMLCYTLIIAFLIGIWA. The propeptide occupies 19–125; sequence APQSEDNVPL…ALNRNIQAKR (107 aa). Disulfide bonds link Cys139/Cys203, Cys181/Cys231, and Cys191/Cys233.

It belongs to the NGF-beta family. In terms of assembly, homodimer; non-covalently linked. In terms of tissue distribution, expressed by the venom gland.

The protein resides in the secreted. Its function is as follows. Nerve growth factor is important for the development and maintenance of the sympathetic and sensory nervous systems. It stimulates division and differentiation of sympathetic and embryonic sensory neurons as well as basal forebrain cholinergic neurons in the brain. Its relevance in the snake venom is not clear. However, it has been shown to inhibit metalloproteinase-dependent proteolysis of platelet glycoprotein Ib alpha, suggesting a metalloproteinase inhibition to prevent metalloprotease autodigestion and/or protection against prey proteases. Binds a lipid between the two protein chains in the homodimer. The lipid-bound form promotes histamine relase from mouse mast cells, contrary to the lipid-free form. The polypeptide is Venom nerve growth factor 1 (Pseudechis australis (Mulga snake)).